A 363-amino-acid chain; its full sequence is Probable tRNA pseudouridine synthase D (363 aa).

Aspartate 82 serves as the catalytic Nucleophile. A TRUD domain is found at 151–363; that stretch reads YLPAYIGYQR…IARTDPRLFT (213 aa).

Belongs to the pseudouridine synthase TruD family.

The enzyme catalyses uridine(13) in tRNA = pseudouridine(13) in tRNA. In terms of biological role, could be responsible for synthesis of pseudouridine from uracil-13 in transfer RNAs. The protein is Probable tRNA pseudouridine synthase D of Sulfurisphaera tokodaii (strain DSM 16993 / JCM 10545 / NBRC 100140 / 7) (Sulfolobus tokodaii).